A 211-amino-acid chain; its full sequence is Urease accessory protein UreF (211 aa).

The tract at residues 71–93 (DDADRETDARTPAPAARHASRSQ) is disordered.

The protein belongs to the UreF family. In terms of assembly, ureD, UreF and UreG form a complex that acts as a GTP-hydrolysis-dependent molecular chaperone, activating the urease apoprotein by helping to assemble the nickel containing metallocenter of UreC. The UreE protein probably delivers the nickel.

Its subcellular location is the cytoplasm. Its function is as follows. Required for maturation of urease via the functional incorporation of the urease nickel metallocenter. The sequence is that of Urease accessory protein UreF from Mycobacterium tuberculosis (strain ATCC 25177 / H37Ra).